The sequence spans 624 residues: (-)-beta-phellandrene synthase 2, chloroplastic (624 aa).

The transit peptide at 1-47 (MALVSVAPLVSMRRSLFSSPYELKSIDKTIPNLVMCRKRMLGRPSIR) directs the protein to the chloroplast. Residues D375, D379, and D527 each contribute to the Mg(2+) site. The short motif at 375–379 (DDIYD) is the DDXXD motif element.

The protein belongs to the terpene synthase family. Tpsd subfamily. Mg(2+) is required as a cofactor. Mn(2+) serves as cofactor.

Its subcellular location is the plastid. The protein localises to the chloroplast. It catalyses the reaction (2E)-geranyl diphosphate = (-)-beta-phellandrene + diphosphate. Its pathway is terpene metabolism; oleoresin biosynthesis. It participates in secondary metabolite biosynthesis; terpenoid biosynthesis. Functionally, monoterpene synthase (TPS) involved in the biosynthesis of monoterpene natural products included in conifer oleoresin secretions and volatile emissions; these compounds contribute to biotic and abiotic stress defense against herbivores and pathogens. Catalyzes the conversion of (2E)-geranyl diphosphate (GPP) to (-)-beta-phellandrene. This Pinus contorta (Shore pine) protein is (-)-beta-phellandrene synthase 2, chloroplastic.